The sequence spans 190 residues: Potassium-transporting ATPase KdpC subunit (190 aa).

A helical transmembrane segment spans residues 13–33 (VGFLLLTLMCGVVYPGIVTIF).

This sequence belongs to the KdpC family. The system is composed of three essential subunits: KdpA, KdpB and KdpC.

The protein resides in the cell membrane. In terms of biological role, part of the high-affinity ATP-driven potassium transport (or Kdp) system, which catalyzes the hydrolysis of ATP coupled with the electrogenic transport of potassium into the cytoplasm. This subunit acts as a catalytic chaperone that increases the ATP-binding affinity of the ATP-hydrolyzing subunit KdpB by the formation of a transient KdpB/KdpC/ATP ternary complex. This is Potassium-transporting ATPase KdpC subunit from Listeria monocytogenes serotype 4b (strain CLIP80459).